Consider the following 76-residue polypeptide: Conotoxin Bu28 (76 aa).

The N-terminal stretch at 1–24 (MTSVQSATCCCLLWLVLCVQLVTP) is a signal peptide. A propeptide spanning residues 25-39 (DSPATAQLSRHLTAR) is cleaved from the precursor. Disulfide bonds link cysteine 50-cysteine 63 and cysteine 54-cysteine 65. Arginine amide is present on arginine 69. A propeptide spanning residues 71–76 (VVSSSI) is cleaved from the precursor.

This sequence belongs to the conotoxin J superfamily. Expressed by the venom duct.

The protein localises to the secreted. In terms of biological role, highly inhibits both nicotinic acetylcholine receptors (neuronal (alpha-3/beta-4) and muscular (alpha-1/beta-1/epsilon/delta) subtypes) and the voltage-gated potassium channel Kv1.6/KCNA6 subtype. The sequence is that of Conotoxin Bu28 from Conus bullatus (Bubble cone).